We begin with the raw amino-acid sequence, 1004 residues long: 2-oxoglutarate dehydrogenase E1 component (1004 aa).

It belongs to the alpha-ketoglutarate dehydrogenase family. Homodimer. Part of the 2-oxoglutarate dehydrogenase (OGDH) complex composed of E1 (2-oxoglutarate dehydrogenase), E2 (dihydrolipoamide succinyltransferase) and E3 (dihydrolipoamide dehydrogenase); the complex contains multiple copies of the three enzymatic components (E1, E2 and E3). Thiamine diphosphate is required as a cofactor.

The catalysed reaction is N(6)-[(R)-lipoyl]-L-lysyl-[protein] + 2-oxoglutarate + H(+) = N(6)-[(R)-S(8)-succinyldihydrolipoyl]-L-lysyl-[protein] + CO2. E1 component of the 2-oxoglutarate dehydrogenase (OGDH) complex which catalyzes the decarboxylation of 2-oxoglutarate, the first step in the conversion of 2-oxoglutarate to succinyl-CoA and CO(2). This Brucella ovis (strain ATCC 25840 / 63/290 / NCTC 10512) protein is 2-oxoglutarate dehydrogenase E1 component.